We begin with the raw amino-acid sequence, 380 residues long: Cytochrome b (380 aa).

Helical transmembrane passes span 34–54 (FGSL…LLAT), 78–99 (WLIR…YLHI), 114–134 (WNTG…GYVL), and 179–199 (FFAL…IHLT). Heme b-binding residues include His-84 and His-98. Heme b contacts are provided by His-183 and His-197. Position 202 (His-202) interacts with a ubiquinone. The next 4 membrane-spanning stretches (helical) occupy residues 227–247 (LKDI…ALFS), 289–309 (LGGV…PFLH), 321–341 (ISQL…WVGS), and 348–368 (FIII…ILFP).

This sequence belongs to the cytochrome b family. As to quaternary structure, the cytochrome bc1 complex contains 11 subunits: 3 respiratory subunits (MT-CYB, CYC1 and UQCRFS1), 2 core proteins (UQCRC1 and UQCRC2) and 6 low-molecular weight proteins (UQCRH/QCR6, UQCRB/QCR7, UQCRQ/QCR8, UQCR10/QCR9, UQCR11/QCR10 and a cleavage product of UQCRFS1). This cytochrome bc1 complex then forms a dimer. Heme b is required as a cofactor.

The protein resides in the mitochondrion inner membrane. Component of the ubiquinol-cytochrome c reductase complex (complex III or cytochrome b-c1 complex) that is part of the mitochondrial respiratory chain. The b-c1 complex mediates electron transfer from ubiquinol to cytochrome c. Contributes to the generation of a proton gradient across the mitochondrial membrane that is then used for ATP synthesis. This chain is Cytochrome b (MT-CYB), found in Pelecanoides magellani (Magellanic diving petrel).